A 626-amino-acid chain; its full sequence is Grainyhead-like protein 3 homolog (626 aa).

The transcription activation stretch occupies residues 30 to 95; it reads EAWKTYLENP…QGKRYYHGME (66 aa). In terms of domain architecture, Grh/CP2 DB spans 226–460; the sequence is SLKSDFEYTL…DLETPPVLFI (235 aa).

The protein belongs to the grh/CP2 family. Grainyhead subfamily. As to quaternary structure, homodimer, also forms heterodimers with GRHL1 and GRHL2. Interacts with LMO4. Expressed in brain, colon, pancreas, placenta and kidney. Isoform 1 is expressed in lung and tonsil. Isoform 2 is prostate-specific.

The protein localises to the nucleus. Transcription factor playing important roles in primary neurulation and in the differentiation of stratified epithelia of both ectodermal and endodermal origin. Binds directly to the consensus DNA sequence 5'-AACCGGTT-3' acting as an activator and repressor on distinct target genes. xhibits functional redundancy with GRHL2 in epidermal morphogenetic events and epidermal wound repair. Exhibits functional redundancy with GRHL2 in epidermal morphogenetic events and epidermal wound repair but is essential to form the epidermal barrier with TGM3 as critical direct target gene among others. Despite being dispensable during normal epidermal homeostasis in the adulthood, is again required for barrier repair after immune-mediated epidermal damage, regulates distinct gene batteries in embryonic epidermal differentiation and adult epidermal barrier reformation after injury. Plays unique and cooperative roles with GRHL2 in establishing distinct zones of primary neurulation. Essential for spinal closure, functions cooperatively with GRHL2 in closure 2 (forebrain/midbrain boundary) and posterior neuropore closure. Also required for proper development of the oral periderm. No genetic interaction with GRHL3, no functional cooperativity due to diverse target gene selectivity. The protein is Grainyhead-like protein 3 homolog of Homo sapiens (Human).